Reading from the N-terminus, the 120-residue chain is UPF0102 protein TWT_455 (120 aa).

This sequence belongs to the UPF0102 family.

This chain is UPF0102 protein TWT_455, found in Tropheryma whipplei (strain Twist) (Whipple's bacillus).